The primary structure comprises 75 residues: Exodeoxyribonuclease 7 small subunit (75 aa).

The protein belongs to the XseB family. Heterooligomer composed of large and small subunits.

It is found in the cytoplasm. The catalysed reaction is Exonucleolytic cleavage in either 5'- to 3'- or 3'- to 5'-direction to yield nucleoside 5'-phosphates.. Functionally, bidirectionally degrades single-stranded DNA into large acid-insoluble oligonucleotides, which are then degraded further into small acid-soluble oligonucleotides. The protein is Exodeoxyribonuclease 7 small subunit of Anaplasma phagocytophilum (strain HZ).